The primary structure comprises 420 residues: DNA primase small subunit (420 aa).

Methionine 1 carries the N-acetylmethionine modification. Residues glutamate 44, aspartate 109, and aspartate 111 contribute to the active site. The Mg(2+) site is built by aspartate 109 and aspartate 111. Residues aspartate 109 and aspartate 111 each contribute to the Mn(2+) site. 109–111 (DID) serves as a coordination point for a ribonucleoside 5'-triphosphate. Cysteine 121, cysteine 122, cysteine 128, and cysteine 131 together coordinate Zn(2+). The short motif at 121–131 (CCSSADICPKC) is the Zinc knuckle motif element. Residue 160-166 (SGRRGVH) participates in a ribonucleoside 5'-triphosphate binding. Aspartate 306 serves as a coordination point for Mg(2+). Aspartate 306 provides a ligand contact to Mn(2+). A ribonucleoside 5'-triphosphate is bound by residues 315 to 318 (HLLK) and histidine 324. The segment covering 363-373 (NEEEKEENEAE) has biased composition (acidic residues). Residues 363-382 (NEEEKEENEAESDVKHRTRD) are disordered.

Belongs to the eukaryotic-type primase small subunit family. As to quaternary structure, heterodimer of a catalytic subunit PRIM1 and a regulatory subunit PRIM2, also known as the DNA primase complex. Interacts with PRIM2 (via C-terminus). Component of the alpha DNA polymerase complex (also known as the alpha DNA polymerase-primase complex) consisting of four subunits: the catalytic subunit POLA1, the regulatory subunit POLA2, and the primase complex subunits PRIM1 and PRIM2 respectively. Within the complex, POLA1 directly interacts with PRIM2. The cofactor is Mg(2+). Mn(2+) is required as a cofactor.

It catalyses the reaction ssDNA + n NTP = ssDNA/pppN(pN)n-1 hybrid + (n-1) diphosphate.. With respect to regulation, the presence of the regulatory subunit PRIM2/p58 accelerates the kinetics of initiation and primer extension. Inhibited by arabinose nucleoside derivatives such as fludarabine and vidarabine. Functionally, catalytic subunit of the DNA primase complex and component of the DNA polymerase alpha complex (also known as the alpha DNA polymerase-primase complex - primosome/replisome) which play an essential role in the initiation of DNA synthesis. During the S phase of the cell cycle, the DNA polymerase alpha complex (composed of a catalytic subunit POLA1, an accessory subunit POLA2 and two primase subunits, the catalytic subunit PRIM1 and the regulatory subunit PRIM2) is recruited to DNA at the replicative forks via direct interactions with MCM10 and WDHD1. The primase subunit of the polymerase alpha complex initiates DNA synthesis by oligomerising short RNA primers on both leading and lagging strands. These primers are initially extended by the polymerase alpha catalytic subunit and subsequently transferred to polymerase delta and polymerase epsilon for processive synthesis on the lagging and leading strand, respectively. In the primase complex, both subunits are necessary for the initial di-nucleotide formation, but the extension of the primer depends only on the catalytic subunit. Synthesizes 9-mer RNA primers (also known as the 'unit length' RNA primers). Incorporates only ribonucleotides in the presence of ribo- and deoxy-nucleotide triphosphates (rNTPs, dNTPs). Requires template thymine or cytidine to start the RNA primer synthesis, with an adenine or guanine at its 5'-end. Binds single stranded DNA. The sequence is that of DNA primase small subunit (PRIM1) from Homo sapiens (Human).